A 1291-amino-acid polypeptide reads, in one-letter code: MTEKITLADALSNVEVLDELSLPDEQPCIEAQPCSIIYKANFDTNFEDRNGFVTGIAKYIEEATTHANLNVLLDEGQKHAVMLYTWRCCSRAIPQPKSNEQPNRVEIYEKTVEVLAPEVNKLLNFMYFQRKAIEAFSGEVKRLCHAEKRKDFVSEAYLLTLGKFINMFAVLDELKNMKSSVKNDYSTYRRAAQFLKVMSDSHTLQESQNLSMFLATQNKIRDTVKDTLEKIVGYEDLLSDVVNICVHMFETKMYLTPEEKHMLVKVMGFGLFLMDSDACNINKLDQKKKIRLDRIDRIFKNLEVVPLFGDMQIAPFNYIKRSKHFDSSKWPLSSSNAISPQADLMVHLPQIREDHVKYISELARYTNEVTTTVKENPSDAENRITADLALRGLQLLSEWTSVVTELYSWKLLHPTDHHQNKECPVEAEEYERATRYNYTSEEKFALIEVIAMIKGLQVLMARIETVLCEAIRRNIYSELQDFVQLSLREPLRKAVKNKKDLIRSIIMSVRETSADWQKGYEPTDDPVAKGKKDPDGGFRIQVPRLNVGPSSTQLYMVRTMLESLIADKSGGKRTLRKDIDGNCLLQIDTFHKTSFYWSYLLNFSDTLQKCCDLSQLWYREFYLEMTMGRKVNKCLVRHQHNEECKDLITMEKRIQFPIEMSMPWILTDHILQTKEPSMMEFVLYPLDLYNDSAYYALTVFRKQFLYDEVEAEVNLCFDQFVYKLSEQIFAHYKQLAGSIFLDKRFRLECEVLGFNFQSYPRNNRYETLLKQRHVQLLGRSIDLNKLITQRINANMHKSIELAISRFEGNDITGIVELEGLLEANRICHKLLSKYLALDNFDGMVKEANHNVLAPYGRITLHVFVELNYDFLVNYCYNAATNRFIRTKVNLSSSQAIQREKPPQMSHYYLWGSKQLNAAYSTQYGQYTGFVGSPHFHAMCRLLGYQGIAVVMDIILKDIVKPLIQGSLLQFTKTLMIAMPKSCKLPRCEYGSPGVLSYYQAHLTDIVQYPDAKTELFQSFREFGNSIIFCLLIEQALSQEEVCDLLHAALFQNIFPRPFCKENEKPEAKQKRLEAQFANLQIVSNVEKIGTAKQAMIAREGDLLTRERLCCGLSIFEVILNRVKSYLDDPVWCGPPPANGIIHVDECSEFHRLWSALQFVYCIPVRGTEYTIEELFGEGLNWAGCVMIVLLGQQRRFEALDFCYHILRVQRVDGKDEDVKGIQLKRMVDRIRRFQVLNSQIFSILNKYLKGGDGEGSNVEHVRCFPPPQHPSVISSSSHYQDPQKLRQSINN.

Residues Pro-1270–Asn-1291 form a disordered region. Positions Ser-1271–Asn-1291 are enriched in polar residues.

Belongs to the CYFIP family. As to quaternary structure, interacts with Fmr1 and Rac1. Component of the WAVE complex composed of Hem/Kette, Scar/Wave and Cyfip where it binds through its C-terminus directly to Hem. In terms of tissue distribution, in the embryo, expressed mainly in the gut and in the developing central nervous system where high levels of expression are found in the CNS neuropile. Expression in the gut diminishes as development proceeds (at protein level). In the adult, expressed specifically in the nervous system.

The protein localises to the cytoplasm. Functionally, plays a role in guidance and morphology of central and peripheral axons and in synaptic morphology. Also required for formation of cell membrane protrusions and for bristle development. Plays a role in regulating mitochondrial activity, energy metabolism and membrane potential which maintains normal gamma-aminobutyric acid (GABA) signaling and ensures normal social behavior. The protein is Cytoplasmic FMR1-interacting protein of Drosophila melanogaster (Fruit fly).